The chain runs to 276 residues: Ubiquinone biosynthesis protein coq11, mitochondrial (276 aa).

Belongs to the NAD(P)-dependent epimerase/dehydratase family.

It localises to the mitochondrion. Acts in the coenzyme Q biosynthetic pathway. The polypeptide is Ubiquinone biosynthesis protein coq11, mitochondrial (Schizosaccharomyces pombe (strain 972 / ATCC 24843) (Fission yeast)).